We begin with the raw amino-acid sequence, 314 residues long: Probable cell division protein WhiA (314 aa).

Positions 274-308 (SLKELGEMVSTGPISKSGVNHRLRKLNDLADKIRN) form a DNA-binding region, H-T-H motif.

Belongs to the WhiA family.

Its function is as follows. Involved in cell division and chromosome segregation. The sequence is that of Probable cell division protein WhiA from Staphylococcus aureus (strain Mu3 / ATCC 700698).